The following is a 1520-amino-acid chain: Glutamate synthase [NADPH] large chain (1520 aa).

Cysteine 22 (for GATase activity) is an active-site residue. Residues 22-415 (CGIGLYAHLK…PGKMLLIDLE (394 aa)) enclose the Glutamine amidotransferase type-2 domain. Residues 890–913 (GGKSNSGEGGEDPKRFVPDENGDD) form a disordered region. Basic and acidic residues predominate over residues 900–913 (EDPKRFVPDENGDD). 1060-1112 (LAEAHQTLMLNGLRDRVVLETDGKLMTGRDVVMAALLGAEEFGFATAPLVVLG) is an FMN binding site. 3 residues coordinate [3Fe-4S] cluster: cysteine 1113, cysteine 1119, and cysteine 1124.

The protein belongs to the glutamate synthase family. As to quaternary structure, aggregate of 4 catalytic active heterodimers, consisting of a large and a small subunit. The cofactor is [3Fe-4S] cluster. FAD is required as a cofactor. FMN serves as cofactor.

It carries out the reaction 2 L-glutamate + NADP(+) = L-glutamine + 2-oxoglutarate + NADPH + H(+). Its pathway is amino-acid biosynthesis; L-glutamate biosynthesis via GLT pathway; L-glutamate from 2-oxoglutarate and L-glutamine (NADP(+) route): step 1/1. The protein operates within energy metabolism; nitrogen metabolism. The sequence is that of Glutamate synthase [NADPH] large chain (gltA) from Bacillus subtilis (strain 168).